Consider the following 200-residue polypeptide: Large ribosomal subunit protein uL4 (200 aa).

The tract at residues 42–65 (TRAQKTRSEVSGGGAKPWRQKGTG) is disordered.

It belongs to the universal ribosomal protein uL4 family. As to quaternary structure, part of the 50S ribosomal subunit.

One of the primary rRNA binding proteins, this protein initially binds near the 5'-end of the 23S rRNA. It is important during the early stages of 50S assembly. It makes multiple contacts with different domains of the 23S rRNA in the assembled 50S subunit and ribosome. Functionally, forms part of the polypeptide exit tunnel. This chain is Large ribosomal subunit protein uL4, found in Vibrio parahaemolyticus serotype O3:K6 (strain RIMD 2210633).